The primary structure comprises 325 residues: Lipoyl synthase (325 aa).

Residues Cys68, Cys73, Cys79, Cys94, Cys98, Cys101, and Ser308 each coordinate [4Fe-4S] cluster. The region spanning 80-297 (FGGGTATFMI…ARVANELGFT (218 aa)) is the Radical SAM core domain.

This sequence belongs to the radical SAM superfamily. Lipoyl synthase family. [4Fe-4S] cluster serves as cofactor.

The protein localises to the cytoplasm. The catalysed reaction is [[Fe-S] cluster scaffold protein carrying a second [4Fe-4S](2+) cluster] + N(6)-octanoyl-L-lysyl-[protein] + 2 oxidized [2Fe-2S]-[ferredoxin] + 2 S-adenosyl-L-methionine + 4 H(+) = [[Fe-S] cluster scaffold protein] + N(6)-[(R)-dihydrolipoyl]-L-lysyl-[protein] + 4 Fe(3+) + 2 hydrogen sulfide + 2 5'-deoxyadenosine + 2 L-methionine + 2 reduced [2Fe-2S]-[ferredoxin]. Its pathway is protein modification; protein lipoylation via endogenous pathway; protein N(6)-(lipoyl)lysine from octanoyl-[acyl-carrier-protein]: step 2/2. Catalyzes the radical-mediated insertion of two sulfur atoms into the C-6 and C-8 positions of the octanoyl moiety bound to the lipoyl domains of lipoate-dependent enzymes, thereby converting the octanoylated domains into lipoylated derivatives. This is Lipoyl synthase from Alcanivorax borkumensis (strain ATCC 700651 / DSM 11573 / NCIMB 13689 / SK2).